The following is a 79-amino-acid chain: Acyl carrier protein (79 aa).

The 76-residue stretch at 2–77 (SEIGERVKKI…DATKFLEKNA (76 aa)) folds into the Carrier domain. Ser37 bears the O-(pantetheine 4'-phosphoryl)serine mark.

Belongs to the acyl carrier protein (ACP) family. Post-translationally, 4'-phosphopantetheine is transferred from CoA to a specific serine of apo-ACP by AcpS. This modification is essential for activity because fatty acids are bound in thioester linkage to the sulfhydryl of the prosthetic group.

The protein localises to the cytoplasm. It functions in the pathway lipid metabolism; fatty acid biosynthesis. Functionally, carrier of the growing fatty acid chain in fatty acid biosynthesis. This chain is Acyl carrier protein, found in Afipia carboxidovorans (strain ATCC 49405 / DSM 1227 / KCTC 32145 / OM5) (Oligotropha carboxidovorans).